A 432-amino-acid polypeptide reads, in one-letter code: MGVNDFAIERVWGLQVLDSRGNPTVKAYVKLAGGSLGWGIAPSGASRGEREAVELRDGGGKWRGKGVSRAVSLLNTVVAPRLEGVDARRQAQIDRLLIELDGTPNKSRLGGNTTTALSIAVSRAAAAQARLELFQYLGGAGARRLPIPLLNVINGGVHAGNELDFQEFMIIPYGFESFTEAMRAAVETYGELKSLLKDRYGASAVNVGDEGGFAPPMRSAEEALKTLVDAVEKAGYQPGSEIALGIDAAASQLYSNGRYSVEGKSLSREELLSLYQRLVEQYPIVYLEDPFSEDDYEGFKAAVDALSTETIIVGDDLLVTNPQRVKEASALKAVTGLLVKVNQVGTLTEALEAIQAARDRGIVHIVSHRSGDTEDTFIADLAVATEALMIKTGAPARGERTSKYNRLLEIENILGYSAEYAGPELRGVMGRR.

Glutamine 166 contributes to the (2R)-2-phosphoglycerate binding site. Residue glutamate 210 is the Proton donor of the active site. Residues aspartate 247, glutamate 288, and aspartate 315 each coordinate Mg(2+). (2R)-2-phosphoglycerate is bound by residues lysine 340, arginine 369, serine 370, and lysine 391. Residue lysine 340 is the Proton acceptor of the active site.

It belongs to the enolase family. The cofactor is Mg(2+).

The protein resides in the cytoplasm. It is found in the secreted. It localises to the cell surface. The enzyme catalyses (2R)-2-phosphoglycerate = phosphoenolpyruvate + H2O. Its pathway is carbohydrate degradation; glycolysis; pyruvate from D-glyceraldehyde 3-phosphate: step 4/5. In terms of biological role, catalyzes the reversible conversion of 2-phosphoglycerate (2-PG) into phosphoenolpyruvate (PEP). It is essential for the degradation of carbohydrates via glycolysis. The sequence is that of Enolase from Aeropyrum pernix (strain ATCC 700893 / DSM 11879 / JCM 9820 / NBRC 100138 / K1).